Reading from the N-terminus, the 239-residue chain is Lectin (239 aa).

Residues Asn17 and Asn113 are each glycosylated (N-linked (GlcNAc...) asparagine).

The protein belongs to the leguminous lectin family. In terms of assembly, homodimer.

In terms of biological role, galactose and N-acetyllactosamine specific lectin. The polypeptide is Lectin (Erythrina crista-galli (Cockspur coral tree)).